The chain runs to 220 residues: Uracil-DNA glycosylase (220 aa).

Residue Asp65 is the Proton acceptor of the active site.

This sequence belongs to the uracil-DNA glycosylase (UDG) superfamily. UNG family.

The protein resides in the cytoplasm. The catalysed reaction is Hydrolyzes single-stranded DNA or mismatched double-stranded DNA and polynucleotides, releasing free uracil.. Functionally, excises uracil residues from the DNA which can arise as a result of misincorporation of dUMP residues by DNA polymerase or due to deamination of cytosine. The sequence is that of Uracil-DNA glycosylase from Leuconostoc mesenteroides subsp. mesenteroides (strain ATCC 8293 / DSM 20343 / BCRC 11652 / CCM 1803 / JCM 6124 / NCDO 523 / NBRC 100496 / NCIMB 8023 / NCTC 12954 / NRRL B-1118 / 37Y).